The chain runs to 267 residues: Apolipoprotein A-I (267 aa).

The signal sequence occupies residues 1–18 (MKAAVLTLAVLFLTGSQA). 2 repeat units span residues 68-89 (LKLL…EQLG) and 90-111 (PVTQ…QEMS). Residues 68 to 267 (LKLLDNWDSV…EEYTKKLNTQ (200 aa)) are 10 X approximate tandem repeats. At methionine 110 the chain carries Methionine sulfoxide. One copy of the 3; half-length repeat lies at 112-122 (KDLEEVKAKVQ). 5 repeat units span residues 123–144 (PYLD…QKVE), 145–166 (PLRA…EKLS), 167–188 (PLGE…THLA), 189–210 (PYSD…ENGG), and 211–232 (ARLA…EKAK). Methionine 136 carries the methionine sulfoxide modification. One copy of the 9; half-length repeat lies at 233-243 (PALEDLRQGLL). Repeat unit 10 spans residues 244 to 267 (PVLESFKVSFLSALEEYTKKLNTQ).

This sequence belongs to the apolipoprotein A1/A4/E family. In terms of assembly, homodimer. Interacts with APOA1BP and CLU. Component of a sperm activating protein complex (SPAP), consisting of APOA1, an immunoglobulin heavy chain, an immunoglobulin light chain and albumin. Interacts with NDRG1. Interacts with SCGB3A2. Interacts with NAXE and YJEFN3. In terms of processing, glycosylated. Post-translationally, palmitoylated. Phosphorylation sites are present in the extracellular medium. Major protein of plasma HDL, also found in chylomicrons.

It localises to the secreted. Participates in the reverse transport of cholesterol from tissues to the liver for excretion by promoting cholesterol efflux from tissues and by acting as a cofactor for the lecithin cholesterol acyltransferase (LCAT). As part of the SPAP complex, activates spermatozoa motility. The chain is Apolipoprotein A-I (APOA1) from Pan troglodytes (Chimpanzee).